The chain runs to 149 residues: uncharacterized protein (149 aa).

This is an uncharacterized protein from Acidithiobacillus ferridurans.